The following is a 436-amino-acid chain: Adenylosuccinate synthetase (436 aa).

Residues 13–19 (GDEGKGK) and 41–43 (GHT) contribute to the GTP site. Residue aspartate 14 is the Proton acceptor of the active site. 2 residues coordinate Mg(2+): aspartate 14 and glycine 41. IMP is bound by residues 14 to 17 (DEGK), 39 to 42 (NAGH), threonine 130, arginine 144, glutamine 225, threonine 240, and arginine 304. Residue histidine 42 is the Proton donor of the active site. 300–306 (ATTGRSR) is a binding site for substrate. GTP-binding positions include arginine 306, 332–334 (KLD), and 415–417 (STG).

This sequence belongs to the adenylosuccinate synthetase family. As to quaternary structure, homodimer. It depends on Mg(2+) as a cofactor.

It localises to the cytoplasm. The catalysed reaction is IMP + L-aspartate + GTP = N(6)-(1,2-dicarboxyethyl)-AMP + GDP + phosphate + 2 H(+). It functions in the pathway purine metabolism; AMP biosynthesis via de novo pathway; AMP from IMP: step 1/2. Its function is as follows. Plays an important role in the de novo pathway of purine nucleotide biosynthesis. Catalyzes the first committed step in the biosynthesis of AMP from IMP. The protein is Adenylosuccinate synthetase of Hamiltonella defensa subsp. Acyrthosiphon pisum (strain 5AT).